A 155-amino-acid polypeptide reads, in one-letter code: uncharacterized protein (155 aa).

This is an uncharacterized protein from Autographa californica nuclear polyhedrosis virus (AcMNPV).